The sequence spans 130 residues: Putative pre-16S rRNA nuclease (130 aa).

The protein belongs to the YqgF nuclease family.

The protein resides in the cytoplasm. Its function is as follows. Could be a nuclease involved in processing of the 5'-end of pre-16S rRNA. The sequence is that of Putative pre-16S rRNA nuclease from Buchnera aphidicola subsp. Cinara cedri (strain Cc).